A 943-amino-acid polypeptide reads, in one-letter code: Leucine--tRNA ligase (943 aa).

A 'HIGH' region motif is present at residues 36 to 46 (PYPSGSMHVGH). The 'KMSKS' region motif lies at 623-627 (KMSSS). The interval 910–943 (ASEVVIHTDPEEAPGPEDRKAGARPLRPGIWLEE) is disordered. The segment covering 915–930 (IHTDPEEAPGPEDRKA) has biased composition (basic and acidic residues).

The protein belongs to the class-I aminoacyl-tRNA synthetase family.

The protein localises to the cytoplasm. The catalysed reaction is tRNA(Leu) + L-leucine + ATP = L-leucyl-tRNA(Leu) + AMP + diphosphate. The chain is Leucine--tRNA ligase from Methanopyrus kandleri (strain AV19 / DSM 6324 / JCM 9639 / NBRC 100938).